Consider the following 213-residue polypeptide: Orotate phosphoribosyltransferase (213 aa).

Lys26 serves as a coordination point for 5-phospho-alpha-D-ribose 1-diphosphate. 34-35 is an orotate binding site; the sequence is FF. 5-phospho-alpha-D-ribose 1-diphosphate is bound by residues 72–73, Arg99, Lys100, Lys103, His105, and 124–132; these read YK and DDVITAGTA. Thr128 and Arg156 together coordinate orotate.

It belongs to the purine/pyrimidine phosphoribosyltransferase family. PyrE subfamily. Homodimer. Mg(2+) serves as cofactor.

It carries out the reaction orotidine 5'-phosphate + diphosphate = orotate + 5-phospho-alpha-D-ribose 1-diphosphate. The protein operates within pyrimidine metabolism; UMP biosynthesis via de novo pathway; UMP from orotate: step 1/2. Catalyzes the transfer of a ribosyl phosphate group from 5-phosphoribose 1-diphosphate to orotate, leading to the formation of orotidine monophosphate (OMP). This chain is Orotate phosphoribosyltransferase, found in Escherichia coli O45:K1 (strain S88 / ExPEC).